A 169-amino-acid chain; its full sequence is Non-specific lipid transfer protein GPI-anchored 11 (169 aa).

The first 23 residues, 1–23 (MAYATILMIFSVVALMSGERAHA), serve as a signal peptide directing secretion. Intrachain disulfides connect Cys-27/Cys-70, Cys-37/Cys-54, Cys-55/Cys-95, and Cys-68/Cys-105. Ser-146 carries the GPI-anchor amidated serine lipid modification. The propeptide at 147-169 (SDASLLSVSFAFVIFMALISSFY) is removed in mature form.

This sequence belongs to the plant LTP family. Expressed in a vascular-specific manner, mainly in roots, and, to a lower extent, in hypocotyls, seedlings stems and flowers.

The protein resides in the cell membrane. It is found in the secreted. Its function is as follows. Probable lipid transfer protein. Proteoglycan-like factor that exhibits xylogen activity consisting in mediating local and inductive cell-cell interactions required for xylem differentiation. The sequence is that of Non-specific lipid transfer protein GPI-anchored 11 from Arabidopsis thaliana (Mouse-ear cress).